The following is a 709-amino-acid chain: Molybdenum cofactor sulfurase (709 aa).

K208 carries the post-translational modification N6-(pyridoxal phosphate)lysine. Residue C367 is part of the active site. In terms of domain architecture, MOSC spans 563–707; the sequence is DNALDRQNCR…LESGMSVNFS (145 aa).

It belongs to the class-V pyridoxal-phosphate-dependent aminotransferase family. MOCOS subfamily. It depends on pyridoxal 5'-phosphate as a cofactor.

The catalysed reaction is Mo-molybdopterin + L-cysteine + AH2 = thio-Mo-molybdopterin + L-alanine + A + H2O. Its pathway is cofactor biosynthesis; molybdopterin biosynthesis. In terms of biological role, sulfurates the molybdenum cofactor. Sulfation of molybdenum is essential for xanthine dehydrogenase (XDH) and aldehyde oxidase (ADO) enzymes in which molybdenum cofactor is liganded by 1 oxygen and 1 sulfur atom in active form. In Caenorhabditis elegans, this protein is Molybdenum cofactor sulfurase.